The primary structure comprises 525 residues: Acyl-CoA-binding domain-containing protein 5 (525 aa).

Positions His-43–Met-132 constitute an ACB domain. An acyl-CoA is bound by residues Ile-54–Phe-63, Tyr-74–Lys-78, Lys-100, and Tyr-119. Residues Arg-157 to Ser-216 are disordered. Residues Ser-158–Thr-177 show a composition bias toward polar residues. Positions Lys-181 to Lys-210 form a coiled coil. Ser-184, Ser-185, Ser-187, Ser-191, Ser-206, Ser-270, and Ser-304 each carry phosphoserine. Over residues Glu-198–Ser-216 the composition is skewed to basic and acidic residues. Residues Glu-367 to Arg-376 show a composition bias toward basic and acidic residues. The segment at Glu-367–Arg-433 is disordered. Ser-419 bears the Phosphoserine mark. The span at Asp-422–Ser-432 shows a compositional bias: basic and acidic residues. A coiled-coil region spans residues Glu-438–Leu-467. Lys-460 carries the post-translational modification N6-acetyllysine. A helical membrane pass occupies residues Trp-489–Ala-509.

It belongs to the ATG37 family.

It is found in the peroxisome membrane. In terms of biological role, acyl-CoA binding protein which acts as the peroxisome receptor for pexophagy but is dispensable for aggrephagy and nonselective autophagy. Binds medium- and long-chain acyl-CoA esters. This Pongo abelii (Sumatran orangutan) protein is Acyl-CoA-binding domain-containing protein 5 (ACBD5).